Here is a 232-residue protein sequence, read N- to C-terminus: Putative caffeoyl-CoA O-methyltransferase At1g67980 (232 aa).

Residue lysine 8 participates in substrate binding. S-adenosyl-L-methionine contacts are provided by residues valine 52, glutamate 74, 76 to 77 (GV), serine 82, and aspartate 100. Aspartate 149 contributes to the substrate binding site. Aspartate 149 contacts a divalent metal cation. Aspartate 151 is a binding site for S-adenosyl-L-methionine. Residues aspartate 175 and asparagine 176 each coordinate a divalent metal cation.

This sequence belongs to the class I-like SAM-binding methyltransferase superfamily. Cation-dependent O-methyltransferase family. CCoAMT subfamily. The cofactor is a divalent metal cation.

It catalyses the reaction (E)-caffeoyl-CoA + S-adenosyl-L-methionine = (E)-feruloyl-CoA + S-adenosyl-L-homocysteine + H(+). The protein operates within aromatic compound metabolism; phenylpropanoid biosynthesis. Methylates caffeoyl-CoA to feruloyl-CoA and 5-hydroxyferuloyl-CoA to sinapoyl-CoA. Plays a role in the synthesis of feruloylated polysaccharides. Involved in the reinforcement of the plant cell wall. Also involved in the responding to wounding or pathogen challenge by the increased formation of cell wall-bound ferulic acid polymers. This is Putative caffeoyl-CoA O-methyltransferase At1g67980 from Arabidopsis thaliana (Mouse-ear cress).